Consider the following 379-residue polypeptide: Alcohol dehydrogenase 1 (379 aa).

Zn(2+)-binding residues include Cys-47, Thr-49, His-69, Cys-99, Cys-102, Cys-105, Cys-113, and Cys-177. The an alcohol site is built by Thr-49 and His-69. Thr-49 contacts NAD(+). NAD(+) is bound by residues 202–207 (GLGAVG), Asp-226, Arg-231, Thr-272, Val-295, 295–297 (VGV), Phe-322, and Arg-372.

Belongs to the zinc-containing alcohol dehydrogenase family. In terms of assembly, homodimer. Requires Zn(2+) as cofactor.

It is found in the cytoplasm. The enzyme catalyses a primary alcohol + NAD(+) = an aldehyde + NADH + H(+). It catalyses the reaction a secondary alcohol + NAD(+) = a ketone + NADH + H(+). The chain is Alcohol dehydrogenase 1 (ADH1) from Cenchrus americanus (Pearl millet).